Consider the following 201-residue polypeptide: Akirin-2 (201 aa).

Phosphoserine is present on residues serine 18 and serine 21. The Nuclear localization signal signature appears at 23–28; it reads KRRRCA. Residue serine 55 is modified to Phosphoserine. The SYVS motif motif lies at 198-201; the sequence is SYVS.

The protein belongs to the akirin family. As to quaternary structure, homodimer. Interacts with IPO9; the interaction is direct. Associates with 20S and 26S proteasomes. Interacts with SMARCD1; promoting SWI/SNF complex recruitment. Interacts with NFKBIZ. Interacts with YWHAB. Post-translationally, polyubiquitinated. Polyubiquitination is dependent of UBR5 that extends pre-ubiquitinated AKIRIN2.

The protein localises to the nucleus. It is found in the cytoplasm. The protein resides in the membrane. Molecular adapter that acts as a bridge between a variety of multiprotein complexes, and which is involved in embryonic development, immunity, myogenesis and brain development. Plays a key role in nuclear protein degradation by promoting import of proteasomes into the nucleus: directly binds to fully assembled 20S proteasomes at one end and to nuclear import receptor IPO9 at the other end, bridging them together and mediating the import of pre-assembled proteasome complexes through the nuclear pore. Involved in innate immunity by regulating the production of interleukin-6 (IL6) downstream of Toll-like receptor (TLR): acts by bridging the NF-kappa-B inhibitor NFKBIZ and the SWI/SNF complex, leading to promote induction of IL6. Also involved in adaptive immunity by promoting B-cell activation. Involved in brain development: required for the survival and proliferation of cerebral cortical progenitor cells. Involved in myogenesis: required for skeletal muscle formation and skeletal development, possibly by regulating expression of muscle differentiation factors. Also plays a role in facilitating interdigital tissue regression during limb development. In Mus musculus (Mouse), this protein is Akirin-2.